A 426-amino-acid polypeptide reads, in one-letter code: Dihydroorotase (426 aa).

Zn(2+) contacts are provided by H58 and H60. Substrate contacts are provided by residues 60–62 and N92; that span reads HLR. Zn(2+) contacts are provided by D150, H177, and H230. Substrate is bound at residue N276. D303 serves as a coordination point for Zn(2+). D303 is a catalytic residue. Residues H307 and 321–322 contribute to the substrate site; that span reads FG.

This sequence belongs to the metallo-dependent hydrolases superfamily. DHOase family. Class I DHOase subfamily. Zn(2+) serves as cofactor.

It carries out the reaction (S)-dihydroorotate + H2O = N-carbamoyl-L-aspartate + H(+). It functions in the pathway pyrimidine metabolism; UMP biosynthesis via de novo pathway; (S)-dihydroorotate from bicarbonate: step 3/3. Its function is as follows. Catalyzes the reversible cyclization of carbamoyl aspartate to dihydroorotate. In Listeria monocytogenes serovar 1/2a (strain ATCC BAA-679 / EGD-e), this protein is Dihydroorotase.